Consider the following 528-residue polypeptide: MQGPWVLLLLGLRLQLSLGVIPAEEENPAFWNRQAAEALDAAKKLQPIQKVAKNLILFLGDGLGVPTVTATRILKGQKNGKLGPETPLAMDRFPYLALSKTYNVDRQVPDSAATATAYLCGVKANFQTIGLSAAARFNQCNTTRGNEVISVMNRAKQAGKSVGVVTTTRVQHASPAGTYAHTVNRNWYSDADMPASARQEGCQDIATQLISNMDIDVILGGGRKYMFPMGTPDPEYPADASQNGIRLDGKNLVQEWLAKHQGAWYVWNRTELMQASLDQSVTHLMGLFEPGDTKYEIHRDPTLDPSLMEMTEAALRLLSRNPRGFYLFVEGGRIDHGHHEGVAYQALTEAVMFDDAIERAGQLTSEEDTLTLVTADHSHVFSFGGYTLRGSSIFGLAPSKAQDSKAYTSILYGNGPGYVFNSGVRPDVNESESGSPDYQQQAAVPLSSETHGGEDVAVFARGPQAHLVHGVQEQSFVAHVMAFAACLEPYTACDLAPPACTTDAAHPVAASLPLLAGTLLLLGASAAP.

The first 19 residues, Met-1 to Gly-19, serve as a signal peptide directing secretion. Residue Asp-61 participates in Mg(2+) binding. Zn(2+) is bound by residues Asp-61 and Ser-111. Ser-111 functions as the Phosphoserine intermediate in the catalytic mechanism. A disulfide bond links Cys-140 and Cys-202. Asn-141 is a glycosylation site (N-linked (GlcNAc...) asparagine). Ser-174 contributes to the Mg(2+) binding site. Glu-235 is a binding site for Ca(2+). Asn-268 is a glycosylation site (N-linked (GlcNAc...) asparagine). Residues Phe-288, Glu-289, and Asp-304 each coordinate Ca(2+). Mg(2+) is bound at residue Glu-330. Zn(2+)-binding residues include Asp-335, His-339, Asp-376, and His-377. An N-linked (GlcNAc...) asparagine glycan is attached at Asn-429. His-451 contacts Zn(2+). An intrachain disulfide couples Cys-486 to Cys-493. Asp-503 carries the GPI-anchor amidated aspartate lipid modification. Positions Ala-504–Pro-528 are cleaved as a propeptide — removed in mature form.

This sequence belongs to the alkaline phosphatase family. In terms of assembly, homodimer. The cofactor is Mg(2+). Zn(2+) is required as a cofactor. It depends on Ca(2+) as a cofactor.

It localises to the cell membrane. It carries out the reaction a phosphate monoester + H2O = an alcohol + phosphate. Its function is as follows. Alkaline phosphatase that can hydrolyze various phosphate compounds. The chain is Intestinal-type alkaline phosphatase (ALPI) from Homo sapiens (Human).